A 104-amino-acid polypeptide reads, in one-letter code: L-rhamnose mutarotase (104 aa).

Position 18 (Tyr-18) interacts with substrate. His-22 (proton donor) is an active-site residue. Residues Tyr-41 and 76–77 each bind substrate; that span reads WW.

Belongs to the rhamnose mutarotase family. In terms of assembly, homodimer.

The protein resides in the cytoplasm. The enzyme catalyses alpha-L-rhamnose = beta-L-rhamnose. The protein operates within carbohydrate metabolism; L-rhamnose metabolism. In terms of biological role, involved in the anomeric conversion of L-rhamnose. This Burkholderia ambifaria (strain ATCC BAA-244 / DSM 16087 / CCUG 44356 / LMG 19182 / AMMD) (Burkholderia cepacia (strain AMMD)) protein is L-rhamnose mutarotase.